The following is a 600-amino-acid chain: Autophagy-related protein 22-2 (600 aa).

A disordered region spans residues 1–30 (MAFASPPASPPDEDGQARAPRYPGEDTTPT). The next 4 membrane-spanning stretches (helical) occupy residues 41–61 (YGIA…PLTL), 117–137 (SFAM…LISF), 149–168 (TLLV…FVFI), and 186–206 (CLGS…ASDP). Residues 234 to 257 (SFDGDEPTHRPPTGLGLGGATGTS) form a disordered region. 4 helical membrane passes run 271–291 (GVGL…LLLF), 304–324 (TLPL…FTMV), 378–398 (VIVF…VSGT), and 414–434 (VALL…LWPI). N-linked (GlcNAc...) asparagine glycosylation occurs at asparagine 444. The next 4 membrane-spanning stretches (helical) occupy residues 449–469 (VCIA…IPLF), 484–506 (YPLA…SFFG), 526–546 (KGSS…TGQV), and 549–569 (GFFF…MVDA).

It belongs to the ATG22 family.

The protein localises to the vacuole membrane. In terms of biological role, vacuolar effluxer which mediate the efflux of amino acids resulting from autophagic degradation. The release of autophagic amino acids allows the maintenance of protein synthesis and viability during nitrogen starvation. This Aspergillus niger (strain ATCC MYA-4892 / CBS 513.88 / FGSC A1513) protein is Autophagy-related protein 22-2 (atg22-2).